A 344-amino-acid polypeptide reads, in one-letter code: Dihydroorotase (344 aa).

2 residues coordinate Zn(2+): His-14 and His-16. Substrate contacts are provided by residues 16–18 (HLR) and Asn-42. 3 residues coordinate Zn(2+): Lys-100, His-137, and His-175. Lys-100 is modified (N6-carboxylysine). His-137 is a binding site for substrate. Leu-220 contacts substrate. Asp-248 serves as a coordination point for Zn(2+). Residue Asp-248 is part of the active site. His-252 and Ala-264 together coordinate substrate.

The protein belongs to the metallo-dependent hydrolases superfamily. DHOase family. Class II DHOase subfamily. Homodimer. Zn(2+) serves as cofactor.

It carries out the reaction (S)-dihydroorotate + H2O = N-carbamoyl-L-aspartate + H(+). Its pathway is pyrimidine metabolism; UMP biosynthesis via de novo pathway; (S)-dihydroorotate from bicarbonate: step 3/3. In terms of biological role, catalyzes the reversible cyclization of carbamoyl aspartate to dihydroorotate. The sequence is that of Dihydroorotase from Roseobacter denitrificans (strain ATCC 33942 / OCh 114) (Erythrobacter sp. (strain OCh 114)).